Reading from the N-terminus, the 259-residue chain is Global transcriptional regulator CodY (259 aa).

The segment at 1 to 155 (MNLLQKTRKI…GATVVGMEIL (155 aa)) is GAF domain. Positions 203 to 222 (ASKIADRVGITRSVIVNALR) form a DNA-binding region, H-T-H motif. The residue at position 215 (Ser-215) is a Phosphoserine.

It belongs to the CodY family.

Its subcellular location is the cytoplasm. DNA-binding global transcriptional regulator which is involved in the adaptive response to starvation and acts by directly or indirectly controlling the expression of numerous genes in response to nutrient availability. During rapid exponential growth, CodY is highly active and represses genes whose products allow adaptation to nutrient depletion. The chain is Global transcriptional regulator CodY from Geobacillus sp. (strain WCH70).